Here is a 109-residue protein sequence, read N- to C-terminus: Serine protease inhibitor (109 aa).

A signal peptide spans 1–28; it reads MKMKLLQVHFVLLVSSSFLLGYTGMVTA. 5 cysteine pairs are disulfide-bonded: Cys43/Cys83, Cys52/Cys79, Cys58/Cys73, Cys62/Cys104, and Cys85/Cys98. The TIL domain occupies 43–104; sequence CRENEIFSQC…QGVCILENSC (62 aa).

It belongs to the serine protease inhibitor-like (TIL domain-containing) family. As to expression, ubiquitously expressed (at protein level), including in venom glands. Found more precisely in the epidermis, fat body, gut, muscle, and venom of worker bees.

It localises to the secreted. Dual role peptide that functions as a broad-spectrum antimicrobial peptide and antifibrinolytic toxin. Inhibits trypsin (IC(50)=375 nM), plasmin (IC(50)=2140 nM), and microbial serine proteases (subtilisin A (IC(50)=294 nM) and proteinase K (IC(50)=459 nM)). Exhibits antifibrinolytic activity by binding and inhibiting plasmin. Does not inhibit chymotrypsin, elastase or thrombin. Binds to microbial cell wall carbohydrates (LPS, mannan and N-acetyl-D-glucosamine) and shows antimicrobial activity (MIC=4.1 uM against B.thuringiensis, MIC=4.95 uM against E.coli, MIC=9.6 uM against the fungus B.bassiana). Does not show hemolytic activity. The polypeptide is Serine protease inhibitor (Bombus ignitus (Bumblebee)).